A 270-amino-acid polypeptide reads, in one-letter code: Cell surface glycoprotein CD200 receptor 4 (270 aa).

An N-terminal signal peptide occupies residues 1–25; sequence MHALGRIPTLTLLIFINIFVSGSSC. One can recognise an Ig-like V-type domain in the interval 26–145; sequence TDENQTIQND…GNLEKVYDLQ (120 aa). Topologically, residues 26-241 are extracellular; it reads TDENQTIQND…TMTTPRSLLT (216 aa). N-linked (GlcNAc...) asparagine glycans are attached at residues Asn29 and Asn44. Cystine bridges form between Cys58/Cys129, Cys82/Cys97, Cys164/Cys213, and Cys183/Cys201. One can recognise an Ig-like C2-type domain in the interval 134–229; that stretch reads PEGNLEKVYD…GNQSLSIELS (96 aa). Asn192 is a glycosylation site (N-linked (GlcNAc...) asparagine). Residues 242–262 form a helical membrane-spanning segment; it reads ILYVKMALLVIILLNVGFAFF. The Cytoplasmic portion of the chain corresponds to 263–270; the sequence is QKRNFART.

It belongs to the CD200R family. In terms of assembly, interacts with TYROBP. As to expression, highly expressed in monocytes, NK cells and a subset of NKT cells. Weakly expressed in granulocytes and B-cells (at protein level). Expressed in brain, lung, testis, thymus, intestine and uterus. Expressed in bone marrow derived-macrophage and dendritic cells and mast cells.

The protein localises to the membrane. In terms of biological role, involved in the recruitment or surface expression of the TYROBP receptor. In Mus musculus (Mouse), this protein is Cell surface glycoprotein CD200 receptor 4 (Cd200r4).